Consider the following 466-residue polypeptide: 23S rRNA (uracil(1939)-C(5))-methyltransferase RlmD (466 aa).

Positions 1–22 (MSSQPNPTSHPEAASAASAASN) are disordered. In terms of domain architecture, TRAM spans 17-81 (ASAASNDPVV…PSYEQAHLVE (65 aa)). Positions 94, 100, 103, and 182 each coordinate [4Fe-4S] cluster. S-adenosyl-L-methionine is bound by residues Gln290, Phe319, Asn324, Glu340, Asn368, and Asp389. Cys422 serves as the catalytic Nucleophile.

This sequence belongs to the class I-like SAM-binding methyltransferase superfamily. RNA M5U methyltransferase family. RlmD subfamily.

It carries out the reaction uridine(1939) in 23S rRNA + S-adenosyl-L-methionine = 5-methyluridine(1939) in 23S rRNA + S-adenosyl-L-homocysteine + H(+). Functionally, catalyzes the formation of 5-methyl-uridine at position 1939 (m5U1939) in 23S rRNA. This chain is 23S rRNA (uracil(1939)-C(5))-methyltransferase RlmD, found in Cupriavidus metallidurans (strain ATCC 43123 / DSM 2839 / NBRC 102507 / CH34) (Ralstonia metallidurans).